The primary structure comprises 254 residues: Metallo-beta-lactamase type 2 (254 aa).

The first 27 residues, 1–27 (MMKGWMKCGLAGAVVLMASFWGGSVRA), serve as a signal peptide directing secretion. A Zn(2+)-binding site is contributed by Asp-99. The substrate site is built by Thr-135 and His-174. Cys-193 serves as a coordination point for Zn(2+). Residues Lys-196 and Asn-201 each contribute to the substrate site. Position 231 (His-231) interacts with Zn(2+).

This sequence belongs to the metallo-beta-lactamase superfamily. Class-B beta-lactamase family. In terms of assembly, monomer. The cofactor is Zn(2+).

It is found in the periplasm. The enzyme catalyses a beta-lactam + H2O = a substituted beta-amino acid. Competitively inhibited by mercaptophosphonate and pyridine carboxylate derivatives. Also inhibited by the binding of a second zinc ion and by chelating agents such as EDTA. In terms of biological role, confers resistance to the different beta-lactams antibiotics (penicillin, cephalosporin and carbapenem) via the hydrolysis of the beta-lactam ring. It is able to hydrolyze penicillin and imipenem, but is much less active against cephalothin, cefotaxime, meropenem and ceftazidime. This chain is Metallo-beta-lactamase type 2, found in Aeromonas hydrophila.